A 271-amino-acid chain; its full sequence is Glutamate racemase (271 aa).

Substrate contacts are provided by residues 10 to 11 (DS) and 42 to 43 (YG). Catalysis depends on Cys-73, which acts as the Proton donor/acceptor. 74-75 (NT) is a substrate binding site. The active-site Proton donor/acceptor is Cys-183. Residue 184–185 (TH) coordinates substrate.

Belongs to the aspartate/glutamate racemases family.

It catalyses the reaction L-glutamate = D-glutamate. It participates in cell wall biogenesis; peptidoglycan biosynthesis. In terms of biological role, provides the (R)-glutamate required for cell wall biosynthesis. This chain is Glutamate racemase, found in Lactococcus lactis subsp. cremoris (strain MG1363).